A 234-amino-acid polypeptide reads, in one-letter code: Leucyl/phenylalanyl-tRNA--protein transferase (234 aa).

It belongs to the L/F-transferase family.

The protein resides in the cytoplasm. The enzyme catalyses N-terminal L-lysyl-[protein] + L-leucyl-tRNA(Leu) = N-terminal L-leucyl-L-lysyl-[protein] + tRNA(Leu) + H(+). The catalysed reaction is N-terminal L-arginyl-[protein] + L-leucyl-tRNA(Leu) = N-terminal L-leucyl-L-arginyl-[protein] + tRNA(Leu) + H(+). It carries out the reaction L-phenylalanyl-tRNA(Phe) + an N-terminal L-alpha-aminoacyl-[protein] = an N-terminal L-phenylalanyl-L-alpha-aminoacyl-[protein] + tRNA(Phe). In terms of biological role, functions in the N-end rule pathway of protein degradation where it conjugates Leu, Phe and, less efficiently, Met from aminoacyl-tRNAs to the N-termini of proteins containing an N-terminal arginine or lysine. The chain is Leucyl/phenylalanyl-tRNA--protein transferase from Escherichia coli O45:K1 (strain S88 / ExPEC).